The primary structure comprises 424 residues: UPF0053 protein MG146 homolog (424 aa).

One can recognise a CNNM transmembrane domain in the interval 6 to 191 (SGGLLALIII…EQNGLFTKED (186 aa)). Transmembrane regions (helical) follow at residues 7–27 (GGLL…SAVV), 71–91 (LITI…ILFL), 101–121 (AISS…LCEI), and 135–155 (LVYF…ITKL). 2 CBS domains span residues 210–270 (MIKW…NEPF) and 275–335 (LLYP…EHDE).

The protein belongs to the UPF0053 family.

The protein resides in the cell membrane. In Mycoplasma pneumoniae (strain ATCC 29342 / M129 / Subtype 1) (Mycoplasmoides pneumoniae), this protein is UPF0053 protein MG146 homolog.